The following is a 497-amino-acid chain: Pentatricopeptide repeat-containing protein At2g36240 (497 aa).

PPR repeat units lie at residues 156–186 (LEPI…MKRL), 192–226 (NVGV…RAKP), 227–261 (DVCT…GCEP), 262–296 (NVVS…GCRF), 297–331 (SEAT…RVLP), 332–366 (SEFD…GQTP), 367–401 (CFIA…GILP), 402–436 (DSVT…GYEP), and 437–471 (DETT…DMLP).

This sequence belongs to the PPR family. P subfamily.

This is Pentatricopeptide repeat-containing protein At2g36240 from Arabidopsis thaliana (Mouse-ear cress).